The sequence spans 200 residues: Histone chaperone asf1a-B (200 aa).

It belongs to the ASF1 family. As to quaternary structure, interacts with histone H3 (including both histone H3.1 and H3.3) and histone H4.

The protein localises to the nucleus. Its function is as follows. Histone chaperone that facilitates histone deposition and histone exchange and removal during nucleosome assembly and disassembly. The polypeptide is Histone chaperone asf1a-B (asf1ab) (Xenopus laevis (African clawed frog)).